Consider the following 514-residue polypeptide: RNA polymerase sigma factor SigA (514 aa).

Residues 135–159 (AAKKATAKKAAAKKTTAKKTAAKKS) show a composition bias toward basic residues. The segment at 135–205 (AAKKATAKKA…SDDDEDDAPA (71 aa)) is disordered. A sigma-70 factor domain-2 region spans residues 281–351 (LLEANLRLVV…TRAMADQART (71 aa)). Residues 305 to 308 (DLIQ) carry the Interaction with polymerase core subunit RpoC motif. Positions 360-436 (EVINKLARVQ…DSEAVVPADA (77 aa)) are sigma-70 factor domain-3. Residues 449-502 (VLDTLSEREAGVVSMRFGLTDGQPKTLDEIGKVYGVTRERIRQIESKTMSKLRH) are sigma-70 factor domain-4. Residues 475–494 (LDEIGKVYGVTRERIRQIES) constitute a DNA-binding region (H-T-H motif).

Belongs to the sigma-70 factor family. RpoD/SigA subfamily. As to quaternary structure, interacts transiently with the RNA polymerase catalytic core.

Its subcellular location is the cytoplasm. Functionally, sigma factors are initiation factors that promote the attachment of RNA polymerase to specific initiation sites and are then released. This sigma factor is the primary sigma factor during exponential growth. This Streptomyces griseus protein is RNA polymerase sigma factor SigA.